The following is a 369-amino-acid chain: Glutamate 5-kinase (369 aa).

ATP is bound at residue K9. Positions 49, 136, and 148 each coordinate substrate. ATP is bound by residues T168–D169 and T210–K216. In terms of domain architecture, PUA spans Q275–W355.

Belongs to the glutamate 5-kinase family.

The protein resides in the cytoplasm. It catalyses the reaction L-glutamate + ATP = L-glutamyl 5-phosphate + ADP. Its pathway is amino-acid biosynthesis; L-proline biosynthesis; L-glutamate 5-semialdehyde from L-glutamate: step 1/2. In terms of biological role, catalyzes the transfer of a phosphate group to glutamate to form L-glutamate 5-phosphate. This chain is Glutamate 5-kinase, found in Streptococcus pneumoniae serotype 2 (strain D39 / NCTC 7466).